We begin with the raw amino-acid sequence, 367 residues long: Putative F-box protein At4g10190 (367 aa).

The region spanning 3-53 (KRNIVDLPEDLVMEILARVPTVTLVRLQSTSKRWNVLIEDKRFAEQHFTNA) is the F-box domain.

The protein is Putative F-box protein At4g10190 of Arabidopsis thaliana (Mouse-ear cress).